The chain runs to 556 residues: MQFDYIIIGAGSAGNVLATRLTEDPNTTVLLLEAGGPDYRFDFRTQMPAALAFPLQGKRYNWAYETEPEPFMNNRRMECGRGKGLGGSSLINGMCYIRGNALDLDNWAQEPGLENWSYLDCLPYYRKAETRDVGENDYHGGDGPVSVTTSKPGVNPLFEAMIEAGVQAGYPRTDDLNGYQQEGFGPMDRTVTPHGRRASTARGYLDQAKSRPNLTIRTHAMTDHIIFDGKRAVGVEWLEGDSTIPTRATANKEVLLCAGAIASPQILQRSGVGSAELLAEFDIPLVHDLPGVGENLQDHLEMYLQYECKEPVSLYPALQWWNQPKIGAEWLFGGTGVGASNHFEAGGFIRSREEFAWPNIQYHFLPVAINYNGSNAVKEHGFQCHVGSMRSPSRGHVRIKSRDPHQHPAILFNYMSHEQDWQEFRDAIRITREIMHQPALDQYRGREISPGVECQTDEQLDEFVRNHAETAFHPCGTCKMGYDEMAVVDGEGRVHGLEGLRVVDASIMPQIITGNLNATTIMIGEKMADMIRGKDALPRSTAGYYVANGRPVRAKK.

An FAD-binding site is contributed by 4–33 (DYIIIGAGSAGNVLATRLTEDPNTTVLLLE). Catalysis depends on His473, which acts as the Proton acceptor.

The protein belongs to the GMC oxidoreductase family. FAD serves as cofactor.

The catalysed reaction is choline + A = betaine aldehyde + AH2. It carries out the reaction betaine aldehyde + NAD(+) + H2O = glycine betaine + NADH + 2 H(+). It functions in the pathway amine and polyamine biosynthesis; betaine biosynthesis via choline pathway; betaine aldehyde from choline (cytochrome c reductase route): step 1/1. Its function is as follows. Involved in the biosynthesis of the osmoprotectant glycine betaine. Catalyzes the oxidation of choline to betaine aldehyde and betaine aldehyde to glycine betaine at the same rate. In Escherichia coli O17:K52:H18 (strain UMN026 / ExPEC), this protein is Oxygen-dependent choline dehydrogenase.